Here is a 138-residue protein sequence, read N- to C-terminus: Larval cuticle protein 1 (138 aa).

The signal sequence occupies residues 1–16 (MFKFVMVFAVLGVAAA). One can recognise a Chitin-binding type R&amp;R domain in the interval 49 to 110 (ADGFDADLLV…PVGAVLPTPP (62 aa)).

Functionally, component of the larval cuticle. This Drosophila miranda (Fruit fly) protein is Larval cuticle protein 1 (Lcp1).